A 311-amino-acid polypeptide reads, in one-letter code: Probable deoxyhypusine synthase (311 aa).

Catalysis depends on lysine 284, which acts as the Nucleophile.

The protein belongs to the deoxyhypusine synthase family. NAD(+) is required as a cofactor.

The catalysed reaction is [eIF5A protein]-L-lysine + spermidine = [eIF5A protein]-deoxyhypusine + propane-1,3-diamine. It participates in protein modification; eIF5A hypusination. Functionally, catalyzes the NAD-dependent oxidative cleavage of spermidine and the subsequent transfer of the butylamine moiety of spermidine to the epsilon-amino group of a specific lysine residue of the eIF-5A precursor protein to form the intermediate deoxyhypusine residue. This is Probable deoxyhypusine synthase from Sulfolobus acidocaldarius (strain ATCC 33909 / DSM 639 / JCM 8929 / NBRC 15157 / NCIMB 11770).